Consider the following 284-residue polypeptide: Bifunctional protein FolD (284 aa).

Residues 166–168 (GAS), Ser191, and Ile232 each bind NADP(+).

This sequence belongs to the tetrahydrofolate dehydrogenase/cyclohydrolase family. Homodimer.

The catalysed reaction is (6R)-5,10-methylene-5,6,7,8-tetrahydrofolate + NADP(+) = (6R)-5,10-methenyltetrahydrofolate + NADPH. The enzyme catalyses (6R)-5,10-methenyltetrahydrofolate + H2O = (6R)-10-formyltetrahydrofolate + H(+). The protein operates within one-carbon metabolism; tetrahydrofolate interconversion. Its function is as follows. Catalyzes the oxidation of 5,10-methylenetetrahydrofolate to 5,10-methenyltetrahydrofolate and then the hydrolysis of 5,10-methenyltetrahydrofolate to 10-formyltetrahydrofolate. The sequence is that of Bifunctional protein FolD from Neisseria meningitidis serogroup C (strain 053442).